Here is a 1069-residue protein sequence, read N- to C-terminus: Leucine--tRNA ligase (1069 aa).

Positions 19-53 are disordered; the sequence is TAEHGTGAANATASPSGAVPPSGATATAGTGDEPG. The 'HIGH' region motif lies at 107–118; sequence PYPSGTGLHVGH. Positions 823 to 836 are enriched in basic and acidic residues; it reads GRFTHHGAPVDRRS. Positions 823 to 846 are disordered; that stretch reads GRFTHHGAPVDRRSGKMGKSLKNS. Positions 838–842 match the 'KMSKS' region motif; it reads KMGKS. Lys-841 is a binding site for ATP.

Belongs to the class-I aminoacyl-tRNA synthetase family.

It localises to the cytoplasm. It catalyses the reaction tRNA(Leu) + L-leucine + ATP = L-leucyl-tRNA(Leu) + AMP + diphosphate. In Frankia alni (strain DSM 45986 / CECT 9034 / ACN14a), this protein is Leucine--tRNA ligase.